The following is a 397-amino-acid chain: Acetate kinase (397 aa).

A Mg(2+)-binding site is contributed by Asn7. Lys14 contributes to the ATP binding site. Arg90 lines the substrate pocket. Asp147 (proton donor/acceptor) is an active-site residue. Residues 207–211 (HLGNG), 282–284 (DFR), and 330–334 (GLGEN) each bind ATP. Position 383 (Glu383) interacts with Mg(2+).

It belongs to the acetokinase family. In terms of assembly, homodimer. Mg(2+) is required as a cofactor. Mn(2+) serves as cofactor.

It localises to the cytoplasm. The enzyme catalyses acetate + ATP = acetyl phosphate + ADP. The protein operates within metabolic intermediate biosynthesis; acetyl-CoA biosynthesis; acetyl-CoA from acetate: step 1/2. Functionally, catalyzes the formation of acetyl phosphate from acetate and ATP. Can also catalyze the reverse reaction. The polypeptide is Acetate kinase (Clostridium botulinum (strain ATCC 19397 / Type A)).